A 369-amino-acid chain; its full sequence is tRNA-specific 2-thiouridylase MnmA (369 aa).

ATP is bound by residues glycine 12–serine 19 and methionine 38. Residues asparagine 98–aspartate 100 are interaction with target base in tRNA. Cysteine 103 (nucleophile) is an active-site residue. Cysteine 103 and cysteine 200 are disulfide-bonded. ATP is bound at residue glycine 128. Residues lysine 150–glutamine 152 form an interaction with tRNA region. Cysteine 200 (cysteine persulfide intermediate) is an active-site residue. Residues arginine 312–tyrosine 313 form an interaction with tRNA region.

The protein belongs to the MnmA/TRMU family. Interacts with TusE.

The protein localises to the cytoplasm. It carries out the reaction S-sulfanyl-L-cysteinyl-[protein] + uridine(34) in tRNA + AH2 + ATP = 2-thiouridine(34) in tRNA + L-cysteinyl-[protein] + A + AMP + diphosphate + H(+). Functionally, catalyzes the 2-thiolation of uridine at the wobble position (U34) of tRNA(Lys), tRNA(Glu) and tRNA(Gln), leading to the formation of s(2)U34, the first step of tRNA-mnm(5)s(2)U34 synthesis. Sulfur is provided by IscS, via a sulfur-relay system. Binds ATP and its substrate tRNAs. This chain is tRNA-specific 2-thiouridylase MnmA, found in Sodalis glossinidius (strain morsitans).